The primary structure comprises 593 residues: MNVLKRGSDQDNWWQAYPGLYARELAAYEGHGASHRPLIQQDGTLILEVLWPMDSAGSIRLNVGYSPLHPFCRPSISAPELQLERHQNPFTRDLCLLTQDSAQWYPHQMVADFIAERLSQVLQVMTLRRNEQWSEAASLEEQAPDPVTPYHMHVAEEYSAVFFDGQQTVPNAPLGTAVFLLQDRLERGRSPPFQAILSKVEPLSGTWMAKPFDLPKRAGPWKNVIGRWIRLEPPFPEAPEEILAAAEKAIERQSALFPAHLKKLGSIADDDLSITAVVFQEELSYGPDNKGNGWFFLVSRRVPGSRRRQVSLVRGYRLSSDMLSRLPVASALKSKKVVLVGCGAIGSFAAVELARSGVGQLTIIDFDLVEPGNTVRWALGRSVWGLPKTTALHDFLYHNYPWTNVGRGHAKVGSAISNVDDVRKLEGNPMRWLRALIEDADIVVDTSASTECQGALAYMCRSIGKRYVLGHATEGAAGGVVARFKPGAPGCYVCLQQHWSGKTLPLPTIDSSGTIVPTGCNAPTFTGGAFDLQEVSMEVVRSTIGLLAPDVYDSGDWQLSILDLTENGRRILPRWKAETIAPHSSCSCGASQG.

This is an uncharacterized protein from Sinorhizobium fredii (strain NBRC 101917 / NGR234).